The primary structure comprises 70 residues: uncharacterized protein (70 aa).

This is an uncharacterized protein from Thermoproteus tenax virus 1 (strain KRA1) (TTV1).